Here is a 68-residue protein sequence, read N- to C-terminus: MKKGIHPELKPTTFVCGCGNTFTLLSTKGGTVYLEVCNQCHPFYAGKLKIKPAYYEMLAEFEGGKKEE.

Zn(2+) is bound by residues Cys16, Cys18, Cys37, and Cys40.

It belongs to the bacterial ribosomal protein bL31 family. Type A subfamily. In terms of assembly, part of the 50S ribosomal subunit. Zn(2+) serves as cofactor.

Binds the 23S rRNA. The chain is Large ribosomal subunit protein bL31 from Aquifex aeolicus (strain VF5).